An 892-amino-acid polypeptide reads, in one-letter code: Protein FAM193B (892 aa).

Disordered stretches follow at residues 1–78 (MTRR…TSSQ), 164–192 (SCGG…NSGD), 237–321 (EHHQ…PLLK), and 379–403 (DEGL…THPR). The segment covering 28-37 (APEPQPPPPS) has biased composition (pro residues). Basic and acidic residues predominate over residues 56 to 65 (DGPREEEEPK). Low complexity predominate over residues 169-185 (SHSSSSSSSSSSSSSSS). 3 stretches are compositionally biased toward pro residues: residues 248–258 (PNSPTGPPPHP), 274–285 (YPPPLPTTPVAP), and 309–321 (SPHP…PLLK). A compositionally biased stretch (acidic residues) spans 379–388 (DEGLGEEEDS). The segment covering 391 to 400 (ERSSCTSSST) has biased composition (low complexity). Residues 485–517 (NSARAAKRARHKLKKKEKEKARLATEALKQVNR) adopt a coiled-coil conformation. 2 stretches are compositionally biased toward polar residues: residues 587–597 (LTPSDLSGSSQ) and 610–621 (TLGSPQSHTLQA). Disordered stretches follow at residues 587 to 655 (LTPS…ENGL) and 671 to 837 (VKTP…SLDD). A compositionally biased stretch (pro residues) spans 637-650 (PPPWTEVRGPPPGI). The span at 736–757 (KSQVSSPKQPSKGSEPAKVGSG) shows a compositional bias: low complexity. Serine 764, serine 776, and serine 882 each carry phosphoserine.

This sequence belongs to the FAM193 family.

The protein localises to the cytoplasm. Its subcellular location is the nucleus. This chain is Protein FAM193B (Fam193b), found in Mus musculus (Mouse).